Reading from the N-terminus, the 117-residue chain is MNFGLRLIFLVLVLKGVLCDVKLVESGGGLVKLGGSLKLSCAASGFTFSSYYMSWVRQTPEKRLELVAAINSNGGSTYYPDTVKGRFTISRDNAKNTLYLQMSSLKSEDTALYYCAR.

An N-terminal signal peptide occupies residues 1-19; sequence MNFGLRLIFLVLVLKGVLC. The tract at residues 20 to 49 is framework-1; it reads DVKLVESGGGLVKLGGSLKLSCAASGFTFS. Cysteine 41 and cysteine 115 form a disulfide bridge. The interval 50–54 is complementarity-determining-1; sequence SYYMS. The segment at 55–68 is framework-2; it reads WVRQTPEKRLELVA. Residues 69-85 form a complementarity-determining-2 region; sequence AINSNGGSTYYPDTVKG. Residues 86–117 are framework-3; it reads RFTISRDNAKNTLYLQMSSLKSEDTALYYCAR.

This is Ig heavy chain V region RF from Mus musculus (Mouse).